A 388-amino-acid chain; its full sequence is Protein-glutamate methylesterase/protein-glutamine glutaminase 1 (388 aa).

The region spanning 4 to 121 (QVLVVDDSSF…ATNKDEAIRL (118 aa)) is the Response regulatory domain. Asp-55 is modified (4-aspartylphosphate). Residues 149-190 (SARAGLSSTSPTLGSSTLGRSPASGLASSASRNSPTVSTPAS) form a disordered region. Positions 153–169 (GLSSTSPTLGSSTLGRS) are enriched in low complexity. Positions 174-189 (LASSASRNSPTVSTPA) are enriched in polar residues. The CheB-type methylesterase domain maps to 188–388 (PASAIRASGK…EAILKESGRG (201 aa)). Active-site residues include Ser-207, His-234, and Asp-330.

Belongs to the CheB family. Post-translationally, phosphorylated by CheA. Phosphorylation of the N-terminal regulatory domain activates the methylesterase activity.

The protein resides in the cytoplasm. It catalyses the reaction [protein]-L-glutamate 5-O-methyl ester + H2O = L-glutamyl-[protein] + methanol + H(+). It carries out the reaction L-glutaminyl-[protein] + H2O = L-glutamyl-[protein] + NH4(+). Its function is as follows. Involved in chemotaxis. Part of a chemotaxis signal transduction system that modulates chemotaxis in response to various stimuli. Catalyzes the demethylation of specific methylglutamate residues introduced into the chemoreceptors (methyl-accepting chemotaxis proteins or MCP) by CheR. Also mediates the irreversible deamidation of specific glutamine residues to glutamic acid. This Shewanella denitrificans (strain OS217 / ATCC BAA-1090 / DSM 15013) protein is Protein-glutamate methylesterase/protein-glutamine glutaminase 1.